The following is a 471-amino-acid chain: 3-isopropylmalate dehydratase large subunit (471 aa).

[4Fe-4S] cluster-binding residues include Cys347, Cys407, and Cys410. Residues 417–443 form a disordered region; that stretch reads TLQPGERSASTSNRNFEGRQGKGGRTH.

This sequence belongs to the aconitase/IPM isomerase family. LeuC type 1 subfamily. As to quaternary structure, heterodimer of LeuC and LeuD. It depends on [4Fe-4S] cluster as a cofactor.

The catalysed reaction is (2R,3S)-3-isopropylmalate = (2S)-2-isopropylmalate. It participates in amino-acid biosynthesis; L-leucine biosynthesis; L-leucine from 3-methyl-2-oxobutanoate: step 2/4. Functionally, catalyzes the isomerization between 2-isopropylmalate and 3-isopropylmalate, via the formation of 2-isopropylmaleate. This Nocardioides sp. (strain ATCC BAA-499 / JS614) protein is 3-isopropylmalate dehydratase large subunit.